Consider the following 136-residue polypeptide: Galectin-7 (136 aa).

The region spanning 6-136 (HKTPLPQGVR…DVQLHSVKIF (131 aa)) is the Galectin domain. 70–76 (WGREERG) is an a beta-D-galactoside binding site.

In terms of assembly, monomer.

Its subcellular location is the cytoplasm. It is found in the nucleus. The protein localises to the secreted. Could be involved in cell-cell and/or cell-matrix interactions necessary for normal growth control. Pro-apoptotic protein that functions intracellularly upstream of JNK activation and cytochrome c release. The chain is Galectin-7 (Lgals7) from Rattus norvegicus (Rat).